A 137-amino-acid polypeptide reads, in one-letter code: MGVRKRETADARKEANKSIAFAKLNNCPTSPRKMRLVADLVRGQKVDRALNILRFSSKEASRKLEKLVLSVIANWQAKNPEANMEEAGLFIKTITVDGGMMLKRLRPAPQGRAHRIRKRSNHVTIVLGSINNTQAIN.

This sequence belongs to the universal ribosomal protein uL22 family. Part of the 50S ribosomal subunit.

This protein binds specifically to 23S rRNA; its binding is stimulated by other ribosomal proteins, e.g. L4, L17, and L20. It is important during the early stages of 50S assembly. It makes multiple contacts with different domains of the 23S rRNA in the assembled 50S subunit and ribosome. Its function is as follows. The globular domain of the protein is located near the polypeptide exit tunnel on the outside of the subunit, while an extended beta-hairpin is found that lines the wall of the exit tunnel in the center of the 70S ribosome. The chain is Large ribosomal subunit protein uL22 from Flavobacterium psychrophilum (strain ATCC 49511 / DSM 21280 / CIP 103535 / JIP02/86).